The following is a 478-amino-acid chain: 3-isopropylmalate dehydratase large subunit (478 aa).

Cys-359, Cys-417, and Cys-420 together coordinate [4Fe-4S] cluster.

It belongs to the aconitase/IPM isomerase family. LeuC type 1 subfamily. As to quaternary structure, heterodimer of LeuC and LeuD. [4Fe-4S] cluster is required as a cofactor.

It catalyses the reaction (2R,3S)-3-isopropylmalate = (2S)-2-isopropylmalate. The protein operates within amino-acid biosynthesis; L-leucine biosynthesis; L-leucine from 3-methyl-2-oxobutanoate: step 2/4. Catalyzes the isomerization between 2-isopropylmalate and 3-isopropylmalate, via the formation of 2-isopropylmaleate. This Anaeromyxobacter sp. (strain Fw109-5) protein is 3-isopropylmalate dehydratase large subunit.